Here is a 340-residue protein sequence, read N- to C-terminus: Phospho-N-acetylmuramoyl-pentapeptide-transferase (340 aa).

9 consecutive transmembrane segments (helical) span residues 22 to 42 (VVVP…LLIP), 69 to 89 (TMGG…WSGW), 95 to 115 (AVAL…WLVI), 129 to 149 (LLLQ…QGIP), 156 to 176 (GIGT…VLVG), 186 to 206 (GMDG…GLLH), 209 to 229 (PELS…LVHN), 235 to 257 (LFMG…LLGD), and 316 to 336 (VVGS…AWWH).

This sequence belongs to the glycosyltransferase 4 family. MraY subfamily. Requires Mg(2+) as cofactor.

It localises to the cell inner membrane. It carries out the reaction UDP-N-acetyl-alpha-D-muramoyl-L-alanyl-gamma-D-glutamyl-meso-2,6-diaminopimeloyl-D-alanyl-D-alanine + di-trans,octa-cis-undecaprenyl phosphate = di-trans,octa-cis-undecaprenyl diphospho-N-acetyl-alpha-D-muramoyl-L-alanyl-D-glutamyl-meso-2,6-diaminopimeloyl-D-alanyl-D-alanine + UMP. The protein operates within cell wall biogenesis; peptidoglycan biosynthesis. Its function is as follows. Catalyzes the initial step of the lipid cycle reactions in the biosynthesis of the cell wall peptidoglycan: transfers peptidoglycan precursor phospho-MurNAc-pentapeptide from UDP-MurNAc-pentapeptide onto the lipid carrier undecaprenyl phosphate, yielding undecaprenyl-pyrophosphoryl-MurNAc-pentapeptide, known as lipid I. This Synechococcus sp. (strain JA-2-3B'a(2-13)) (Cyanobacteria bacterium Yellowstone B-Prime) protein is Phospho-N-acetylmuramoyl-pentapeptide-transferase.